Reading from the N-terminus, the 360-residue chain is Glucan endo-1,3-beta-glucosidase B (360 aa).

Residues 1–25 (MATSQIAIIVLLGLLVATNIHITEA) form the signal peptide. Glutamine 26 carries the post-translational modification Pyrrolidone carboxylic acid. Glutamate 120 serves as the catalytic Proton donor. The Nucleophile role is filled by glutamate 265. The propeptide at 341–360 (VSERVWDITNSTASSLTSEI) is removed in mature form. N-linked (GlcNAc...) asparagine glycosylation occurs at asparagine 350.

It belongs to the glycosyl hydrolase 17 family.

Its subcellular location is the vacuole. The enzyme catalyses Hydrolysis of (1-&gt;3)-beta-D-glucosidic linkages in (1-&gt;3)-beta-D-glucans.. In terms of biological role, implicated in the defense of plants against pathogens. This chain is Glucan endo-1,3-beta-glucosidase B, found in Solanum lycopersicum (Tomato).